We begin with the raw amino-acid sequence, 287 residues long: D-apionate oxidoisomerase (287 aa).

NAD(+) is bound by residues 13–15 (GKM), Glu36, and Asp71. Zn(2+) is bound by residues His116 and Glu186.

This sequence belongs to the ApnO family. Zn(2+) is required as a cofactor.

The enzyme catalyses D-apionate + NAD(+) = 3-oxoisoapionate + NADH + H(+). The protein operates within carbohydrate metabolism. In terms of biological role, involved in catabolism of D-apiose. Catalyzes the conversion of D-apionate to 3-oxo-isoapionate. This Blautia hydrogenotrophica (strain DSM 10507 / JCM 14656 / S5a33) (Ruminococcus hydrogenotrophicus) protein is D-apionate oxidoisomerase.